We begin with the raw amino-acid sequence, 509 residues long: Activin receptor type-1 (509 aa).

A signal peptide spans 1–20; the sequence is MVDGVMILPVLVMIAFPFPS. Residues 21-123 lie on the Extracellular side of the membrane; sequence MEDEKPKVNP…FPGTQNFHLE (103 aa). N102 carries an N-linked (GlcNAc...) asparagine glycan. Residues 124-146 traverse the membrane as a helical segment; that stretch reads VGLIILSVVFAVCLLACLLGVAL. The Cytoplasmic segment spans residues 147-509; that stretch reads RKFKRRNQER…NSLDKLKTDC (363 aa). Residues 178–207 enclose the GS domain; the sequence is STLADLLDHSCTSGSGSGLPFLVQRTVARQ. The region spanning 208 to 502 is the Protein kinase domain; the sequence is ITLLECVGKG…KTLTKIDNSL (295 aa). ATP contacts are provided by residues 214–222 and K235; that span reads VGKGRYGEV. D336 serves as the catalytic Proton acceptor. S501 carries the phosphoserine modification.

This sequence belongs to the protein kinase superfamily. TKL Ser/Thr protein kinase family. TGFB receptor subfamily. In terms of assembly, interacts with FKBP1A. Interacts with FCHO1. Interacts with CLU. Interacts with type II receptors AMHR2 and ACVR2A. Interacts with BMP7. Interacts with BMP9. Interacts with BMP6 (when glycosylated); the interaction may induce HAMP expression. Interacts with TSC22D1/TSC-22. The cofactor is Mg(2+). It depends on Mn(2+) as a cofactor.

The protein resides in the membrane. The catalysed reaction is L-threonyl-[receptor-protein] + ATP = O-phospho-L-threonyl-[receptor-protein] + ADP + H(+). It catalyses the reaction L-seryl-[receptor-protein] + ATP = O-phospho-L-seryl-[receptor-protein] + ADP + H(+). In terms of biological role, bone morphogenetic protein (BMP) type I receptor that is involved in a wide variety of biological processes, including bone, heart, cartilage, nervous, and reproductive system development and regulation. As a type I receptor, forms heterotetrameric receptor complexes with the type II receptors AMHR2, ACVR2A ors ACVR2B. Upon binding of ligands such as BMP7 or BMP9 to the heteromeric complexes, type II receptors transphosphorylate ACVR1 intracellular domain. In turn, ACVR1 kinase domain is activated and subsequently phosphorylates SMAD1/5/8 proteins that transduce the signal. In addition to its role in mediating BMP pathway-specific signaling, suppresses TGFbeta/activin pathway signaling by interfering with the binding of activin to its type II receptor. Besides canonical SMAD signaling, can activate non-canonical signaling pathways. May promote the expression of HAMP, potentially via its interaction with BMP6. The chain is Activin receptor type-1 (ACVR1) from Bos taurus (Bovine).